The primary structure comprises 344 residues: N-acetyl-gamma-glutamyl-phosphate reductase (344 aa).

Residue Cys-150 is part of the active site.

It belongs to the NAGSA dehydrogenase family. Type 1 subfamily.

The protein resides in the cytoplasm. The catalysed reaction is N-acetyl-L-glutamate 5-semialdehyde + phosphate + NADP(+) = N-acetyl-L-glutamyl 5-phosphate + NADPH + H(+). It functions in the pathway amino-acid biosynthesis; L-arginine biosynthesis; N(2)-acetyl-L-ornithine from L-glutamate: step 3/4. In terms of biological role, catalyzes the NADPH-dependent reduction of N-acetyl-5-glutamyl phosphate to yield N-acetyl-L-glutamate 5-semialdehyde. This chain is N-acetyl-gamma-glutamyl-phosphate reductase, found in Azotobacter vinelandii (strain DJ / ATCC BAA-1303).